A 353-amino-acid polypeptide reads, in one-letter code: UDP-galactose transporter (353 aa).

6 consecutive transmembrane segments (helical) span residues 147 to 167 (LGPMKWFSLFLLTGGIAIVQL), 184 to 204 (VTGFSAVLVACLISGLAGVYF), 215 to 235 (LWVRNVQLSFFSLFPCLFTIL), 254 to 274 (IVWLAILLQAGGGIIVALCVA), 279 to 299 (IMKNFSTSISIIISSLASVYL), and 302 to 322 (FKISLTFLIGVMLVIAATFLY). The disordered stretch occupies residues 325–353 (PESKPSPSRGTYIPMTTQDAAAKDVDHKH). A compositionally biased stretch (polar residues) spans 329–343 (PSPSRGTYIPMTTQD).

The protein belongs to the nucleotide-sugar transporter family. SLC35A subfamily.

The protein localises to the golgi apparatus membrane. Functionally, essential for the transport of UDP-galactose into the lumen of Golgi apparatus. The sequence is that of UDP-galactose transporter (gms1) from Schizosaccharomyces pombe (strain 972 / ATCC 24843) (Fission yeast).